An 815-amino-acid polypeptide reads, in one-letter code: Ent-sandaracopimara-8(14),15-diene synthase, chloroplastic (815 aa).

The N-terminal 38 residues, 1 to 38 (MLPSSICSMGQIPRTSPHYYGMLPKQMSKGHPPMVTRA), are a transit peptide targeting the chloroplast. D550, D554, N696, T700, and E704 together coordinate Mg(2+). Positions 550–554 (DDFFD) match the DDXXD motif motif.

It belongs to the terpene synthase family. The cofactor is Mg(2+).

It localises to the plastid. It is found in the chloroplast. The enzyme catalyses ent-copalyl diphosphate = ent-sandaracopimara-8(14),15-diene + diphosphate. The catalysed reaction is 9alpha-copalyl diphosphate = (12E)-9alpha-labda-8(17),12,14-triene + diphosphate. Functionally, involved in the biosynthesis of oryzalexin A-F phytoalexins. Catalyzes the conversion of ent-copalyl diphosphate to the phytoalexin precursor ent-sandaracopimaradiene. This chain is Ent-sandaracopimara-8(14),15-diene synthase, chloroplastic, found in Oryza sativa subsp. japonica (Rice).